The following is a 320-amino-acid chain: Ferrochelatase (320 aa).

Residues His-194 and Glu-275 each coordinate Fe cation.

This sequence belongs to the ferrochelatase family.

It is found in the cytoplasm. It carries out the reaction heme b + 2 H(+) = protoporphyrin IX + Fe(2+). It functions in the pathway porphyrin-containing compound metabolism; protoheme biosynthesis; protoheme from protoporphyrin-IX: step 1/1. Functionally, catalyzes the ferrous insertion into protoporphyrin IX. The polypeptide is Ferrochelatase (Pectobacterium atrosepticum (strain SCRI 1043 / ATCC BAA-672) (Erwinia carotovora subsp. atroseptica)).